The sequence spans 482 residues: Glutamyl-tRNA(Gln) amidotransferase subunit A (482 aa).

Residues lysine 75 and serine 150 each act as charge relay system in the active site. Serine 174 acts as the Acyl-ester intermediate in catalysis.

This sequence belongs to the amidase family. GatA subfamily. Heterotrimer of A, B and C subunits.

It catalyses the reaction L-glutamyl-tRNA(Gln) + L-glutamine + ATP + H2O = L-glutaminyl-tRNA(Gln) + L-glutamate + ADP + phosphate + H(+). In terms of biological role, allows the formation of correctly charged Gln-tRNA(Gln) through the transamidation of misacylated Glu-tRNA(Gln) in organisms which lack glutaminyl-tRNA synthetase. The reaction takes place in the presence of glutamine and ATP through an activated gamma-phospho-Glu-tRNA(Gln). This chain is Glutamyl-tRNA(Gln) amidotransferase subunit A, found in Cyanothece sp. (strain PCC 7425 / ATCC 29141).